We begin with the raw amino-acid sequence, 652 residues long: ATP-dependent zinc metalloprotease FtsH 1 (652 aa).

The Cytoplasmic segment spans residues 1–9 (MSDNKWLRN). A helical membrane pass occupies residues 10-30 (GFVWMILIIAAIAVWVTFVQG). Residues 31 to 110 (GRGGATITTQ…QTHRASQWGN (80 aa)) are Extracellular-facing. The helical transmembrane segment at 111-131 (VLGTLTFLLPTLFLIGVIIFM) threads the bilayer. The Cytoplasmic portion of the chain corresponds to 132–652 (MRQAQGTNNQ…VPHIKPQPAS (521 aa)). 203–210 (GPPGTGKT) contacts ATP. Position 425 (His-425) interacts with Zn(2+). Glu-426 is a catalytic residue. Positions 429 and 501 each coordinate Zn(2+). Residues 623–652 (IATPETARPDSPSEARPAAPVPHIKPQPAS) are disordered. Pro residues predominate over residues 641–652 (APVPHIKPQPAS).

This sequence in the central section; belongs to the AAA ATPase family. The protein in the C-terminal section; belongs to the peptidase M41 family. Homohexamer. Requires Zn(2+) as cofactor.

It is found in the cell membrane. Acts as a processive, ATP-dependent zinc metallopeptidase for both cytoplasmic and membrane proteins. Plays a role in the quality control of integral membrane proteins. The sequence is that of ATP-dependent zinc metalloprotease FtsH 1 from Thermomicrobium roseum (strain ATCC 27502 / DSM 5159 / P-2).